We begin with the raw amino-acid sequence, 391 residues long: Mannose-6-phosphate isomerase (391 aa).

Positions 97, 99, 134, and 255 each coordinate Zn(2+). Arg274 is a catalytic residue.

This sequence belongs to the mannose-6-phosphate isomerase type 1 family. The cofactor is Zn(2+).

The protein localises to the cytoplasm. It catalyses the reaction D-mannose 6-phosphate = D-fructose 6-phosphate. Its function is as follows. Involved in the conversion of glucose to GDP-L-fucose, which can be converted to L-fucose, a capsular polysaccharide. The polypeptide is Mannose-6-phosphate isomerase (manA) (Salmonella typhimurium (strain LT2 / SGSC1412 / ATCC 700720)).